The chain runs to 199 residues: MAQQSLYFQTKLEDKVSLLPSQMVGNMENYLLENLEAKVKDKVTEHGIVLKVNRIIEYDYGIISKNNFSGTAIYRVKYECLICSPVKNLSIICLVENIVKGYIIAKNGPVIVAIPFNNIDSDKFQLTNGNIVYKNNSNNIQKGDYVKVSIINIKTNLNEKKITTIAKLLDMATNDEIKSYDNDQLLIVNGDVDDEQEFI.

Belongs to the eukaryotic RPB7/RPC8 RNA polymerase subunit family.

It localises to the virion. It carries out the reaction RNA(n) + a ribonucleoside 5'-triphosphate = RNA(n+1) + diphosphate. This Acanthamoeba polyphaga (Amoeba) protein is Putative DNA-directed RNA polymerase subunit L376.